The chain runs to 78 residues: Acyl carrier protein (78 aa).

A Carrier domain is found at 2–77 (DDLFKKIQQL…DAYEFIKSQQ (76 aa)). Serine 37 is modified (O-(pantetheine 4'-phosphoryl)serine).

It belongs to the acyl carrier protein (ACP) family. 4'-phosphopantetheine is transferred from CoA to a specific serine of apo-ACP by AcpS. This modification is essential for activity because fatty acids are bound in thioester linkage to the sulfhydryl of the prosthetic group.

Its subcellular location is the cytoplasm. It functions in the pathway lipid metabolism; fatty acid biosynthesis. Carrier of the growing fatty acid chain in fatty acid biosynthesis. This is Acyl carrier protein from Treponema denticola (strain ATCC 35405 / DSM 14222 / CIP 103919 / JCM 8153 / KCTC 15104).